The sequence spans 228 residues: SPbeta prophage-derived uncharacterized protein YomL (228 aa).

A signal peptide spans 1-28 (MRKKRVITCVMAASLTLGSLLPAGYATA).

This Bacillus subtilis (strain 168) protein is SPbeta prophage-derived uncharacterized protein YomL (yomL).